A 243-amino-acid polypeptide reads, in one-letter code: 23S rRNA (guanosine-2'-O-)-methyltransferase RlmB (243 aa).

S-adenosyl-L-methionine-binding residues include Gly-196, Ile-216, and Leu-225.

The protein belongs to the class IV-like SAM-binding methyltransferase superfamily. RNA methyltransferase TrmH family. RlmB subfamily. As to quaternary structure, homodimer.

The protein localises to the cytoplasm. It catalyses the reaction guanosine(2251) in 23S rRNA + S-adenosyl-L-methionine = 2'-O-methylguanosine(2251) in 23S rRNA + S-adenosyl-L-homocysteine + H(+). In terms of biological role, specifically methylates the ribose of guanosine 2251 in 23S rRNA. The sequence is that of 23S rRNA (guanosine-2'-O-)-methyltransferase RlmB from Salmonella typhi.